The primary structure comprises 186 residues: Large ribosomal subunit protein uL5 (186 aa).

It belongs to the universal ribosomal protein uL5 family. Part of the 50S ribosomal subunit; part of the 5S rRNA/L5/L18/L25 subcomplex. Contacts the 5S rRNA and the P site tRNA. Forms a bridge to the 30S subunit in the 70S ribosome.

Its function is as follows. This is one of the proteins that bind and probably mediate the attachment of the 5S RNA into the large ribosomal subunit, where it forms part of the central protuberance. In the 70S ribosome it contacts protein S13 of the 30S subunit (bridge B1b), connecting the 2 subunits; this bridge is implicated in subunit movement. Contacts the P site tRNA; the 5S rRNA and some of its associated proteins might help stabilize positioning of ribosome-bound tRNAs. The protein is Large ribosomal subunit protein uL5 of Porphyromonas gingivalis (strain ATCC 33277 / DSM 20709 / CIP 103683 / JCM 12257 / NCTC 11834 / 2561).